The following is a 430-amino-acid chain: Putative cytochrome P450 139 (430 aa).

Cysteine 372 serves as a coordination point for heme.

It belongs to the cytochrome P450 family. Heme is required as a cofactor.

The chain is Putative cytochrome P450 139 (cyp139) from Mycobacterium bovis (strain ATCC BAA-935 / AF2122/97).